Consider the following 1082-residue polypeptide: Probable arabinosyltransferase B (1082 aa).

The next 13 helical transmembrane spans lie at 28–50 (WVAT…LPVT), 223–241 (LAAM…LALW), 262–281 (VTAV…VIGA), 333–352 (SIWI…LLLS), 359–381 (LGPA…LGAW), 420–442 (AITT…AALL), 462–481 (WPLI…VVFA), 522–544 (AISR…FMML), 557–574 (AWRL…LMFT), 578–600 (WTHH…TVLV), 613–635 (AFLS…WWYV), 650–672 (GGVQ…AFWL), and 689–711 (APIP…IGVV).

This sequence belongs to the emb family.

The protein localises to the cell membrane. Its function is as follows. Arabinosyl transferase responsible for the polymerization of arabinose into the arabinan of arabinogalactan. In Mycolicibacterium smegmatis (Mycobacterium smegmatis), this protein is Probable arabinosyltransferase B (embB).